Consider the following 488-residue polypeptide: Long chain base biosynthesis protein 2a (488 aa).

Residues 4 to 24 (LPYTTALTTLFSYGLLFAFGQ) traverse the membrane as a helical segment. At K311 the chain carries N6-(pyridoxal phosphate)lysine.

The protein belongs to the class-II pyridoxal-phosphate-dependent aminotransferase family. As to quaternary structure, heterodimer with LCB1. Component of the serine palmitoyltransferase (SPT) complex, composed of LCB1 and LCB2. It depends on pyridoxal 5'-phosphate as a cofactor.

The protein localises to the endoplasmic reticulum membrane. It carries out the reaction L-serine + hexadecanoyl-CoA + H(+) = 3-oxosphinganine + CO2 + CoA. It participates in lipid metabolism; sphingolipid metabolism. In terms of biological role, serine palmitoyltransferase (SPT). The heterodimer formed with LCB1 constitutes the catalytic core. In Oryza sativa subsp. japonica (Rice), this protein is Long chain base biosynthesis protein 2a.